The sequence spans 428 residues: Enolase 2 (428 aa).

Residue glutamine 162 participates in (2R)-2-phosphoglycerate binding. Residue glutamate 204 is the Proton donor of the active site. Mg(2+)-binding residues include aspartate 241, glutamate 285, and aspartate 312. (2R)-2-phosphoglycerate is bound by residues lysine 337, arginine 366, serine 367, and lysine 388. Lysine 337 acts as the Proton acceptor in catalysis.

The protein belongs to the enolase family. Mg(2+) serves as cofactor.

It is found in the cytoplasm. It localises to the secreted. The protein localises to the cell surface. It carries out the reaction (2R)-2-phosphoglycerate = phosphoenolpyruvate + H2O. The protein operates within carbohydrate degradation; glycolysis; pyruvate from D-glyceraldehyde 3-phosphate: step 4/5. Functionally, catalyzes the reversible conversion of 2-phosphoglycerate (2-PG) into phosphoenolpyruvate (PEP). It is essential for the degradation of carbohydrates via glycolysis. The chain is Enolase 2 from Lactobacillus johnsonii (strain CNCM I-12250 / La1 / NCC 533).